A 107-amino-acid polypeptide reads, in one-letter code: MVLKLRLARFGRTNAPFYNIVVAHARTARNSKPLEVIGTYDPVPKKDTYDTTGKLHKDIKLDVTRAKYWIGVGAQPTDTVWRLLSLVGILDPKYKKPQPAQEQKTKA.

The protein belongs to the bacterial ribosomal protein bS16 family. As to quaternary structure, component of the mitochondrial small ribosomal subunit (mt-SSU). Mature N.crassa 74S mitochondrial ribosomes consist of a small (37S) and a large (54S) subunit. The 37S small subunit contains a 16S ribosomal RNA (16S mt-rRNA) and 32 different proteins. The 54S large subunit contains a 23S rRNA (23S mt-rRNA) and 42 different proteins.

The protein localises to the mitochondrion. Component of the mitochondrial ribosome (mitoribosome), a dedicated translation machinery responsible for the synthesis of mitochondrial genome-encoded proteins, including at least some of the essential transmembrane subunits of the mitochondrial respiratory chain. The mitoribosomes are attached to the mitochondrial inner membrane and translation products are cotranslationally integrated into the membrane. This chain is Small ribosomal subunit protein bS16m (cyt-21), found in Neurospora crassa (strain ATCC 24698 / 74-OR23-1A / CBS 708.71 / DSM 1257 / FGSC 987).